The sequence spans 901 residues: Nuclear factor of activated T-cells, cytoplasmic 4 (901 aa).

Disordered stretches follow at residues 15-179 (LVFG…LSSW) and 203-362 (NEAA…EDSV). A compositionally biased stretch (pro residues) spans 61–81 (IPRPPPPRPGMHSPPPRPAPS). A compositionally biased stretch (gly residues) spans 96-109 (GGPGGNAGGAGGGR). The calcineurin-binding stretch occupies residues 114–119 (PSIRIT). Over residues 114 to 123 (PSIRITSISP) the composition is skewed to low complexity. A compositionally biased stretch (gly residues) spans 151 to 165 (GFGGYREAGGQGGGA). A compositionally biased stretch (low complexity) spans 166-179 (FFSPSPGSSSLSSW). A phosphoserine; by MAPK7 and MAPK14 mark is found at S168 and S170. Phosphoserine; by MAPK8 and MAPK9 is present on residues S213 and S217. The SP 1 repeat unit spans residues 213–229 (SPLPSPRASPRPWTPED). Residues 213–293 (SPLPSPRASP…LSRRGSLGEE (81 aa)) are 2 approximate SP repeats. 2 stretches are compositionally biased toward pro residues: residues 215–227 (LPSP…PWTP) and 254–263 (GPVPASPRPA). The Nuclear localization signal motif lies at 268 to 270 (KRR). The segment covering 272–288 (SSSGTPSSASPALSRRG) has biased composition (low complexity). Residues 277–293 (PSSASPALSRRGSLGEE) form an SP 2; approximate repeat. S289 is modified (phosphoserine). Position 334 is a phosphoserine; by RPS6KA3 (S334). S344 carries the post-translational modification Phosphoserine. In terms of domain architecture, RHD spans 401–582 (SALPPLDWPL…VPIECSQRSA (182 aa)). The DNA-binding element occupies 430 to 437 (RAHYETEG). An IPT/TIG domain is found at 586 to 683 (PQVETYSPSA…KRSPTQSFKF (98 aa)). The Nuclear localization signal signature appears at 672 to 674 (RRK). Residue K689 forms a Glycyl lysine isopeptide (Lys-Gly) (interchain with G-Cter in SUMO2) linkage. 2 disordered regions span residues 695–721 (DSSL…PRPP) and 827–869 (PQSA…FRDS).

In terms of assembly, member of the multicomponent NFATC transcription complex that consists of at least two components, a pre-existing cytoplasmic component NFATC2 and an inducible nuclear component NFATC1. Other NFAT proteins, such as NFATC3, or members of the activating protein-1 (AP-1) family and MAF can also bind the complex. NFAT proteins can bind DNA as monomers or dimers. Component of a promoter-binding complex composed of STAT3, NFATC3 and NFATC4; complex formation is enhanced by calcineurin. Interacts with CREBBP; this interaction potentiates transcription activation. Interacts with MAPK8/JNK1 and MAPK9/JNK2. Interacts with GATA4 (via the second Zn finger). Interacts (via N-terminus) with IRAK1 (via C-terminus). Interacts with RPS6KA3. Interacts with HOMER1, HOMER2 and HOMER3; this interaction competes with calcineurin/PPP3CA-binding and hence prevents NFATC4 dephosphorylation and activation. Interacts with ESR1 and ESR2; this interaction decreases NFATC4 transcriptional activity. Interacts with MTOR and MAPK7/ERK5. Interacts with TRIM17; this interaction prevents NFATC3 nuclear localization. Interacts with TCF25 (via C-terminus); the interaction leads to suppression of NFATC4 transcription factor activity and is reduced following stimulation with angiotensin-2. In terms of processing, phosphorylated by NFATC-kinases; dephosphorylated by calcineurin/PPP3CA. Phosphorylated on Ser-168 and Ser-170 by MTOR, IRAK1, MAPK7/ERK5 and MAPK14/p38, on Ser-213 and Ser-217 by MAPK8 and MAPK9, and on Ser-289 and Ser-344 by RPS6KA3. Phosphorylated by GSK3B. Phosphorylation by GSK3B markedly increases NFATC4 ubiquitination. Phosphorylation by MAPK8/JNK1, MAPK9/JNK2 and RPS6KA3 may stimulate NFATC4 transcriptional activity. Phosphorylation at Ser-168 and Ser-170 is stimulated by UV irradiation. Ubiquitinated, leading to degradation by the proteasome. Ubiquitination may be stimulated by GSK3B-dependent phosphorylation. Polyubiquitin linkage mainly occurs through 'Lys-48'. In terms of tissue distribution, widely expressed. In the brain, expressed in neurons. Expressed in the hippocampus (at protein level). In the hippocampus, expressed in both the CA1-CA3 pyramidal cells and the dentate gyrus granular cells. Expressed in a subset of hippocampal cells representing adult-born neurons (at protein level). Expressed in the submandibular gland (at protein level). In the olfactory system, expressed at low levels in the glomerular and granular layers and in the mitral cell layer. In the cerebellum, expressed at moderate levels in granular neurons. Expressed at moderate levels in the choroid plexus and ependymal cells. Expressed in neurons of the cochlear nucleus (at protein level). Expressed at low levels in the heart (at protein level). Expressed in ventricular cardiomyocytes (at protein level). Expressed in the lung.

It is found in the cytoplasm. Its subcellular location is the nucleus. Functionally, ca(2+)-regulated transcription factor that is involved in several processes, including the development and function of the immune, cardiovascular, musculoskeletal, and nervous systems. Involved in T-cell activation, stimulating the transcription of cytokine genes, including that of IL2 and IL4. Following JAK/STAT signaling activation and as part of a complex with NFATC3 and STAT3, binds to the alpha-beta E4 promoter region of CRYAB and activates transcription in cardiomyocytes. Along with NFATC3, involved in embryonic heart development. Involved in mitochondrial energy metabolism required for cardiac morphogenesis and function. Transactivates many genes involved in heart physiology. Along with GATA4, binds to and activates NPPB/BNP promoter. Activates NPPA/ANP/ANF and MYH7/beta-MHC transcription. Binds to and transactivates AGTR2 gene promoter. Involved in the regulation of adult hippocampal neurogenesis. Involved in BDNF-driven pro-survival signaling in hippocampal adult-born neurons. Involved in the formation of long-term spatial memory and long-term potentiation. In cochlear nucleus neurons, may play a role in deafferentation-induced apoptosis during a developmental critical period when auditory neurons depend on afferent input for survival. Binds to and activates the BACE1/Beta-secretase 1 promoter, hence may regulate the proteolytic processing of the amyloid precursor protein (APP). Plays a role in adipocyte differentiation. May be involved in myoblast differentiation into myotubes. Binds the consensus DNA sequence 5'-GGAAAAT-3'. In the presence of CREBBP, activates TNF transcription. Binds to PPARG gene promoter and regulates its activity. Binds to PPARG and REG3G gene promoters. The protein is Nuclear factor of activated T-cells, cytoplasmic 4 of Mus musculus (Mouse).